The sequence spans 447 residues: Ribulose bisphosphate carboxylase large chain (447 aa).

Substrate contacts are provided by Asn-89 and Thr-139. Catalysis depends on Lys-141, which acts as the Proton acceptor. Lys-143 serves as a coordination point for substrate. Mg(2+) contacts are provided by Lys-167, Asp-169, and Glu-170. At Lys-167 the chain carries N6-carboxylysine. Residue His-260 is the Proton acceptor of the active site. The substrate site is built by Arg-261, His-293, and Ser-345.

This sequence belongs to the RuBisCO large chain family. Type I subfamily. Heterohexadecamer of 8 large chains and 8 small chains; disulfide-linked. The disulfide link is formed within the large subunit homodimers. Mg(2+) is required as a cofactor. In terms of processing, the disulfide bond which can form in the large chain dimeric partners within the hexadecamer appears to be associated with oxidative stress and protein turnover.

It is found in the plastid. Its subcellular location is the chloroplast. It catalyses the reaction 2 (2R)-3-phosphoglycerate + 2 H(+) = D-ribulose 1,5-bisphosphate + CO2 + H2O. The catalysed reaction is D-ribulose 1,5-bisphosphate + O2 = 2-phosphoglycolate + (2R)-3-phosphoglycerate + 2 H(+). Functionally, ruBisCO catalyzes two reactions: the carboxylation of D-ribulose 1,5-bisphosphate, the primary event in carbon dioxide fixation, as well as the oxidative fragmentation of the pentose substrate in the photorespiration process. Both reactions occur simultaneously and in competition at the same active site. The polypeptide is Ribulose bisphosphate carboxylase large chain (Ligustrum vulgare (Common privet)).